The chain runs to 247 residues: Homeobox-leucine zipper protein HOX15 (247 aa).

Positions methionine 1–leucine 44 are disordered. Residues proline 32–leucine 44 show a composition bias toward low complexity. The segment at residues asparagine 91–glutamine 150 is a DNA-binding region (homeobox). The tract at residues lysine 149–alanine 193 is leucine-zipper. The interval serine 221–cysteine 247 is disordered.

It belongs to the HD-ZIP homeobox family. Class II subfamily. As to expression, expressed in seedlings, stems, leaf blades and panicles.

The protein resides in the nucleus. Probable transcription factor. The sequence is that of Homeobox-leucine zipper protein HOX15 (HOX15) from Oryza sativa subsp. japonica (Rice).